We begin with the raw amino-acid sequence, 830 residues long: Periplasmic nitrate reductase (830 aa).

Residues 1-31 constitute a signal peptide (tat-type signal); that stretch reads MKLSRRDFMKANAAVAAAAAAGMTIPTVAKA. A 4Fe-4S Mo/W bis-MGD-type domain is found at 39–95; the sequence is IKWDKAPCRFCGTGCGVLVGTQNGRIVASQGDPDSPVNRGLNCIKGYFLPKIMYGKD. 4 residues coordinate [4Fe-4S] cluster: Cys-46, Cys-49, Cys-53, and Cys-81. Mo-bis(molybdopterin guanine dinucleotide)-binding positions include Lys-83, Gln-150, Asn-175, Cys-179, 212–219, 243–247, 262–264, Met-372, Gln-376, Asn-482, 508–509, Lys-531, Asp-558, and 718–727; these read WGSNMAEM, STYEH, QTD, SD, and TGRVLEHWHT. Position 794 (Phe-794) interacts with substrate. Residues Asn-802 and Lys-819 each contribute to the Mo-bis(molybdopterin guanine dinucleotide) site.

It belongs to the prokaryotic molybdopterin-containing oxidoreductase family. NasA/NapA/NarB subfamily. As to quaternary structure, component of the periplasmic nitrate reductase NapAB complex composed of NapA and NapB. The cofactor is [4Fe-4S] cluster. Requires Mo-bis(molybdopterin guanine dinucleotide) as cofactor. In terms of processing, predicted to be exported by the Tat system. The position of the signal peptide cleavage has not been experimentally proven.

The protein localises to the periplasm. It catalyses the reaction 2 Fe(II)-[cytochrome] + nitrate + 2 H(+) = 2 Fe(III)-[cytochrome] + nitrite + H2O. Its function is as follows. Catalytic subunit of the periplasmic nitrate reductase complex NapAB. Receives electrons from NapB and catalyzes the reduction of nitrate to nitrite. The polypeptide is Periplasmic nitrate reductase (Yersinia pseudotuberculosis serotype IB (strain PB1/+)).